A 179-amino-acid polypeptide reads, in one-letter code: Protein GrpE (179 aa).

Positions 1–29 (MQDQDKYAEQAASIEDPVTAEAASATTPT) are disordered.

This sequence belongs to the GrpE family. As to quaternary structure, homodimer.

The protein resides in the cytoplasm. Participates actively in the response to hyperosmotic and heat shock by preventing the aggregation of stress-denatured proteins, in association with DnaK and GrpE. It is the nucleotide exchange factor for DnaK and may function as a thermosensor. Unfolded proteins bind initially to DnaJ; upon interaction with the DnaJ-bound protein, DnaK hydrolyzes its bound ATP, resulting in the formation of a stable complex. GrpE releases ADP from DnaK; ATP binding to DnaK triggers the release of the substrate protein, thus completing the reaction cycle. Several rounds of ATP-dependent interactions between DnaJ, DnaK and GrpE are required for fully efficient folding. This Janthinobacterium sp. (strain Marseille) (Minibacterium massiliensis) protein is Protein GrpE.